The sequence spans 270 residues: UPF0354 protein BT9727_4425 (270 aa).

It belongs to the UPF0354 family.

In Bacillus thuringiensis subsp. konkukian (strain 97-27), this protein is UPF0354 protein BT9727_4425.